Consider the following 311-residue polypeptide: tRNA-cytidine(32) 2-sulfurtransferase (311 aa).

The segment at 18–38 is disordered; it reads KVGADHGPSEENGSSHPLFDN. The PP-loop motif motif lies at 77–82; it reads SGGKDS. Cysteine 152, cysteine 155, and cysteine 243 together coordinate [4Fe-4S] cluster.

The protein belongs to the TtcA family. Homodimer. It depends on Mg(2+) as a cofactor. Requires [4Fe-4S] cluster as cofactor.

The protein localises to the cytoplasm. It catalyses the reaction cytidine(32) in tRNA + S-sulfanyl-L-cysteinyl-[cysteine desulfurase] + AH2 + ATP = 2-thiocytidine(32) in tRNA + L-cysteinyl-[cysteine desulfurase] + A + AMP + diphosphate + H(+). It functions in the pathway tRNA modification. Its function is as follows. Catalyzes the ATP-dependent 2-thiolation of cytidine in position 32 of tRNA, to form 2-thiocytidine (s(2)C32). The sulfur atoms are provided by the cysteine/cysteine desulfurase (IscS) system. The polypeptide is tRNA-cytidine(32) 2-sulfurtransferase (Agrobacterium fabrum (strain C58 / ATCC 33970) (Agrobacterium tumefaciens (strain C58))).